The following is a 299-amino-acid chain: RGG repeats nuclear RNA binding protein A (299 aa).

A compositionally biased stretch (gly residues) spans 1–21 (RGGGRGGPRGGGRGRGPGRGR). 2 disordered regions span residues 1–173 (RGGG…KEMT) and 232–299 (EAVE…LVAK). A compositionally biased stretch (basic and acidic residues) spans 45-60 (RVQEDGESGKLSERRG). Residues 61-78 (GYGGPRGGFHGGRRGGFN) show a composition bias toward gly residues. Basic and acidic residues-rich tracts occupy residues 86–98 (EGERPRRVFDRRS) and 134–146 (DGEKIVEAEKEAG). The Arginine-rich RNA-binding motif E-R-P-R-R-X-[F/Y]-[E/D]-R-R-S motif lies at 88–98 (ERPRRVFDRRS). The span at 267–278 (RGRGGFGGGVGG) shows a compositional bias: gly residues.

This sequence belongs to the SERBP1-HABP4 family. In terms of tissue distribution, expressed in seedlings but not in roots.

The protein localises to the nucleus. It localises to the cytoplasm. The protein resides in the perinuclear region. Its function is as follows. Ribosome-binding protein that acts as a regulator of mRNA translation by promoting ribosome inactivation. Binds RNA. This is RGG repeats nuclear RNA binding protein A from Nicotiana tabacum (Common tobacco).